The sequence spans 513 residues: ATP synthase subunit alpha (513 aa).

169-176 is an ATP binding site; it reads GDRQVGKT.

The protein belongs to the ATPase alpha/beta chains family. F-type ATPases have 2 components, CF(1) - the catalytic core - and CF(0) - the membrane proton channel. CF(1) has five subunits: alpha(3), beta(3), gamma(1), delta(1), epsilon(1). CF(0) has three main subunits: a(1), b(2) and c(9-12). The alpha and beta chains form an alternating ring which encloses part of the gamma chain. CF(1) is attached to CF(0) by a central stalk formed by the gamma and epsilon chains, while a peripheral stalk is formed by the delta and b chains.

It localises to the cell inner membrane. The enzyme catalyses ATP + H2O + 4 H(+)(in) = ADP + phosphate + 5 H(+)(out). Its function is as follows. Produces ATP from ADP in the presence of a proton gradient across the membrane. The alpha chain is a regulatory subunit. The protein is ATP synthase subunit alpha of Aeromonas hydrophila subsp. hydrophila (strain ATCC 7966 / DSM 30187 / BCRC 13018 / CCUG 14551 / JCM 1027 / KCTC 2358 / NCIMB 9240 / NCTC 8049).